A 162-amino-acid chain; its full sequence is Phosphopantetheine adenylyltransferase (162 aa).

S9 provides a ligand contact to substrate. ATP-binding positions include 9–10 (SF) and H17. Substrate-binding residues include K41, V77, and K91. ATP-binding positions include 92-94 (GLR), E102, and 126-132 (YAFLSSS).

The protein belongs to the bacterial CoaD family. Homohexamer. Mg(2+) serves as cofactor.

The protein resides in the cytoplasm. The enzyme catalyses (R)-4'-phosphopantetheine + ATP + H(+) = 3'-dephospho-CoA + diphosphate. Its pathway is cofactor biosynthesis; coenzyme A biosynthesis; CoA from (R)-pantothenate: step 4/5. Functionally, reversibly transfers an adenylyl group from ATP to 4'-phosphopantetheine, yielding dephospho-CoA (dPCoA) and pyrophosphate. The polypeptide is Phosphopantetheine adenylyltransferase (Frankia alni (strain DSM 45986 / CECT 9034 / ACN14a)).